The following is a 217-amino-acid chain: Peroxiredoxin (217 aa).

The 158-residue stretch at 2-159 (PVIGEKFPEV…IVRLVKALQV (158 aa)) folds into the Thioredoxin domain. C46 functions as the Cysteine sulfenic acid (-SOH) intermediate in the catalytic mechanism. R122 contacts substrate. C206 and C212 are disulfide-bonded.

This sequence belongs to the peroxiredoxin family. Prx6 subfamily. As to quaternary structure, homodecamer. Pentamer of dimers that assemble into a ring structure.

The protein resides in the cytoplasm. The catalysed reaction is a hydroperoxide + [thioredoxin]-dithiol = an alcohol + [thioredoxin]-disulfide + H2O. Its function is as follows. Thiol-specific peroxidase that catalyzes the reduction of hydrogen peroxide and organic hydroperoxides to water and alcohols, respectively. Plays a role in cell protection against oxidative stress by detoxifying peroxides. In Methanocaldococcus jannaschii (strain ATCC 43067 / DSM 2661 / JAL-1 / JCM 10045 / NBRC 100440) (Methanococcus jannaschii), this protein is Peroxiredoxin.